The chain runs to 38 residues: Anthranilate phosphoribosyltransferase (38 aa).

The protein belongs to the anthranilate phosphoribosyltransferase family. In terms of assembly, homodimer.

It catalyses the reaction N-(5-phospho-beta-D-ribosyl)anthranilate + diphosphate = 5-phospho-alpha-D-ribose 1-diphosphate + anthranilate. It participates in amino-acid biosynthesis; L-tryptophan biosynthesis; L-tryptophan from chorismate: step 2/5. In terms of biological role, catalyzes the transfer of the phosphoribosyl group of 5-phosphorylribose-1-pyrophosphate (PRPP) to anthranilate to yield N-(5'-phosphoribosyl)-anthranilate (PRA). In Serratia marcescens, this protein is Anthranilate phosphoribosyltransferase (trpD).